Reading from the N-terminus, the 174-residue chain is UBX domain-containing protein 5 (174 aa).

A coiled-coil region spans residues 8-58 (QKEKFAEDRALLSQQNKEYAESLAKDIAKKEEKDKIRFEAEQKELRKKTIQ). A UBX domain is found at 74 to 120 (RLLVRYPNGSRLILSFSPSQPMTSLFDAIILNPACPDYFSVRSVYPR).

In terms of assembly, forms a complex composed of deubiquitinating enzyme atx-3, adapter ubxn-5 and cdc-48.1. Interacts with atx-3 (via C-terminus). Interacts with cdc-48.1 (via N-terminus) and cdc-48.2. As to expression, specifically expressed in the germline.

In terms of biological role, probably acts as an adapter for ATPase cdc-48.1 and/or cdc-48.2, conferring substrate specificity. Unlike other UBX domain-containing protein does not bind 'Lys-48'-polyubiquitinated chain. The protein is UBX domain-containing protein 5 of Caenorhabditis elegans.